Reading from the N-terminus, the 31-residue chain is Photosystem II reaction center protein T (31 aa).

The helical transmembrane segment at 3–23 (SAAYILVLALALGVIFFAIAF) threads the bilayer.

The protein belongs to the PsbT family. In terms of assembly, PSII is composed of 1 copy each of membrane proteins PsbA, PsbB, PsbC, PsbD, PsbE, PsbF, PsbH, PsbI, PsbJ, PsbK, PsbL, PsbM, PsbT, PsbX, PsbY, PsbZ, Psb30/Ycf12, peripheral proteins PsbO, CyanoQ (PsbQ), PsbU, PsbV and a large number of cofactors. It forms dimeric complexes.

The protein resides in the cellular thylakoid membrane. Functionally, found at the monomer-monomer interface of the photosystem II (PS II) dimer, plays a role in assembly and dimerization of PSII. PSII is a light-driven water plastoquinone oxidoreductase, using light energy to abstract electrons from H(2)O, generating a proton gradient subsequently used for ATP formation. The sequence is that of Photosystem II reaction center protein T from Trichodesmium erythraeum (strain IMS101).